Consider the following 1214-residue polypeptide: Inner capsid protein VP3 (1214 aa).

Residues 1 to 80 form a disordered region; that stretch reads MPRRSARKAQ…SVNNDGDIIT (80 aa). Polar residues predominate over residues 8 to 18; the sequence is KAQSATASPAD. The segment covering 28–51 has biased composition (low complexity); it reads PTTNSPPSTTSPNQAAADANQQQA. A C2H2-type zinc finger spans residues 117–140; it reads YVCNVCNARFSTMSALSEHLRSDH.

Belongs to the turreted BTV-fold inner capsid family. As to quaternary structure, homodecamer; each decamer is made up of two conformers of VP2, called VP2A and VP2B. 12 homodecamers assemble to form an icosahedral capsid. Interacts with VP6.

Its subcellular location is the virion. In terms of biological role, inner capsid protein that self-assembles to form an icosahedral capsid with a T=2 symmetry, which consists of 120 copies of VP2, with channels at each of its five-fold vertices. This capsid constitutes the innermost concentric layer of the viral mature particle. In Notemigonus crysoleucas (Golden shiner), this protein is Inner capsid protein VP3 (S3).